Here is a 134-residue protein sequence, read N- to C-terminus: Small ribosomal subunit protein uS9 (134 aa).

The interval 114 to 134 is disordered; the sequence is EVERKKYGLKKARRAPQFSKR. Basic residues predominate over residues 120–134; it reads YGLKKARRAPQFSKR.

Belongs to the universal ribosomal protein uS9 family.

In Thermotoga neapolitana (strain ATCC 49049 / DSM 4359 / NBRC 107923 / NS-E), this protein is Small ribosomal subunit protein uS9.